A 284-amino-acid polypeptide reads, in one-letter code: MVILDGKLVSKTRKQLVKQQIDIYLNKGYRKPKLAVILIGNDQASELYVSNKIKACNLVGIESMLLRFDENINSQTLSDQINQLNNDQLVDAILLQLPLPKHLNEQMFLQAITPLKDVDGFHYINQGKMLEGYDTIYPCTPIGIINLLKAYNVDVKSKDITIIGTSNIVGKPLAIMLSNMGATVSMCNKNTKSLKKYTKISDIVISATGKQFIITKDMIKKNAIVIDVGIIRDPITNKIVGDVDFENVKELCSYITPVPGGVGPMTVAMLLENTLQLYKKHIKE.

Residues 164 to 166 and Ile230 contribute to the NADP(+) site; that span reads GTS.

Belongs to the tetrahydrofolate dehydrogenase/cyclohydrolase family. In terms of assembly, homodimer.

It catalyses the reaction (6R)-5,10-methylene-5,6,7,8-tetrahydrofolate + NADP(+) = (6R)-5,10-methenyltetrahydrofolate + NADPH. The enzyme catalyses (6R)-5,10-methenyltetrahydrofolate + H2O = (6R)-10-formyltetrahydrofolate + H(+). Its pathway is one-carbon metabolism; tetrahydrofolate interconversion. In terms of biological role, catalyzes the oxidation of 5,10-methylenetetrahydrofolate to 5,10-methenyltetrahydrofolate and then the hydrolysis of 5,10-methenyltetrahydrofolate to 10-formyltetrahydrofolate. The protein is Bifunctional protein FolD of Mycoplasma capricolum subsp. capricolum (strain California kid / ATCC 27343 / NCTC 10154).